We begin with the raw amino-acid sequence, 273 residues long: Exosome complex component Rrp42 (273 aa).

This sequence belongs to the RNase PH family. Rrp42 subfamily. As to quaternary structure, component of the archaeal exosome complex. Forms a hexameric ring-like arrangement composed of 3 Rrp41-Rrp42 heterodimers. The hexameric ring associates with a trimer of Rrp4 and/or Csl4 subunits.

The protein resides in the cytoplasm. Non-catalytic component of the exosome, which is a complex involved in RNA degradation. Contributes to the structuring of the Rrp41 active site. This is Exosome complex component Rrp42 from Thermococcus gammatolerans (strain DSM 15229 / JCM 11827 / EJ3).